Reading from the N-terminus, the 263-residue chain is 3-methyl-2-oxobutanoate hydroxymethyltransferase 2 (263 aa).

Residues D45 and D84 each contribute to the Mg(2+) site. 3-methyl-2-oxobutanoate-binding positions include 45 to 46, D84, and K112; that span reads DS. A Mg(2+)-binding site is contributed by E114. E181 serves as the catalytic Proton acceptor.

This sequence belongs to the PanB family. In terms of assembly, homodecamer; pentamer of dimers. Mg(2+) serves as cofactor.

Its subcellular location is the cytoplasm. It carries out the reaction 3-methyl-2-oxobutanoate + (6R)-5,10-methylene-5,6,7,8-tetrahydrofolate + H2O = 2-dehydropantoate + (6S)-5,6,7,8-tetrahydrofolate. The protein operates within cofactor biosynthesis; (R)-pantothenate biosynthesis; (R)-pantoate from 3-methyl-2-oxobutanoate: step 1/2. In terms of biological role, catalyzes the reversible reaction in which hydroxymethyl group from 5,10-methylenetetrahydrofolate is transferred onto alpha-ketoisovalerate to form ketopantoate. The protein is 3-methyl-2-oxobutanoate hydroxymethyltransferase 2 of Aliivibrio fischeri (strain ATCC 700601 / ES114) (Vibrio fischeri).